The primary structure comprises 207 residues: UPF0328 protein ECU02_1590/ECU04_0060/ECU08_2120 (207 aa).

Disordered regions lie at residues 1–154 (MPRP…HSHT) and 180–207 (GRLH…LATL). Basic and acidic residues-rich tracts occupy residues 14-24 (DHPDFRSESSA) and 75-97 (HTEG…ETES). 2 stretches are compositionally biased toward polar residues: residues 98–121 (PKPQ…SQNT) and 133–149 (SRPS…QSPH).

The protein belongs to the UPF0328 family.

The chain is UPF0328 protein ECU02_1590/ECU04_0060/ECU08_2120 from Encephalitozoon cuniculi (strain GB-M1) (Microsporidian parasite).